A 1503-amino-acid chain; its full sequence is Lysine-specific demethylase 5B-B (1503 aa).

The JmjN domain occupies 15–56 (CPVFEPSWEEFKDPFAFINKIRPIAEKTGICKVRPPPDWQPP). One can recognise an ARID domain in the interval 80–170 (TRVKLNFLDQ…ILYPYNLFQS (91 aa)). The span at 202 to 211 (VPLQPSNTSA) shows a compositional bias: polar residues. Disordered regions lie at residues 202–223 (VPLQPSNTSAPARRAKRMKTES) and 268–287 (IKELNPEPEKSKPKKKNIPP). Over residues 268–278 (IKELNPEPEKS) the composition is skewed to basic and acidic residues. The PHD-type 1 zinc-finger motif lies at 295-345 (LYVCLVCGKGNDEDRLLLCDGCDDSYHTFCLIPPLTDVPKGDWRCPKCLTQ). Positions 439–605 (KYLQCGWNLN…LGRQCVDHYR (167 aa)) constitute a JmjC domain. Fe cation contacts are provided by His485, Asp488, and His573. The PHD-type 2 zinc-finger motif lies at 1168–1216 (LKVCVCQKPAMGAMLQCELCRDAFHSVCVRGPSDPLDPEAWLCPLCLRS). Disordered regions lie at residues 1362 to 1381 (TNTSHAEHKSYLTPPQTETD) and 1403 to 1442 (ERGTKLKSKKQRMMGVEKRRERKAASVSASDMSQSEDSEE). Residues 1444-1497 (MTLCPAESCLQPEGEEVDWVQCDCCNRWFHMICVGVSAELAAEEDYMCVSCSTS) form a PHD-type 3 zinc finger.

It belongs to the JARID1 histone demethylase family. It depends on Fe(2+) as a cofactor.

The protein resides in the nucleus. The catalysed reaction is N(6),N(6),N(6)-trimethyl-L-lysyl(4)-[histone H3] + 3 2-oxoglutarate + 3 O2 = L-lysyl(4)-[histone H3] + 3 formaldehyde + 3 succinate + 3 CO2. In terms of biological role, histone demethylase that demethylates 'Lys-4' of histone H3, thereby playing a central role in histone code. Does not demethylate histone H3 'Lys-9' or H3 'Lys-27'. Demethylates trimethylated, dimethylated and monomethylated H3 'Lys-4'. Acts as a transcriptional corepressor. In Danio rerio (Zebrafish), this protein is Lysine-specific demethylase 5B-B (kdm5bb).